The sequence spans 804 residues: Leucine--tRNA ligase (804 aa).

Positions 40–51 match the 'HIGH' region motif; it reads PYPSGAGLHVGH. Residues 576–580 carry the 'KMSKS' region motif; it reads KMSKS. Lys579 provides a ligand contact to ATP.

The protein belongs to the class-I aminoacyl-tRNA synthetase family.

It is found in the cytoplasm. It catalyses the reaction tRNA(Leu) + L-leucine + ATP = L-leucyl-tRNA(Leu) + AMP + diphosphate. This is Leucine--tRNA ligase from Staphylococcus haemolyticus (strain JCSC1435).